We begin with the raw amino-acid sequence, 397 residues long: Succinyl-diaminopimelate desuccinylase (397 aa).

His73 is a binding site for Zn(2+). Asp75 is a catalytic residue. Asp106 contacts Zn(2+). The active-site Proton acceptor is the Glu140. Zn(2+) is bound by residues Glu141, Glu169, and His366.

This sequence belongs to the peptidase M20A family. DapE subfamily. Homodimer. Requires Zn(2+) as cofactor. Co(2+) serves as cofactor.

The enzyme catalyses N-succinyl-(2S,6S)-2,6-diaminopimelate + H2O = (2S,6S)-2,6-diaminopimelate + succinate. It participates in amino-acid biosynthesis; L-lysine biosynthesis via DAP pathway; LL-2,6-diaminopimelate from (S)-tetrahydrodipicolinate (succinylase route): step 3/3. In terms of biological role, catalyzes the hydrolysis of N-succinyl-L,L-diaminopimelic acid (SDAP), forming succinate and LL-2,6-diaminopimelate (DAP), an intermediate involved in the bacterial biosynthesis of lysine and meso-diaminopimelic acid, an essential component of bacterial cell walls. The chain is Succinyl-diaminopimelate desuccinylase from Sinorhizobium medicae (strain WSM419) (Ensifer medicae).